A 184-amino-acid chain; its full sequence is dCTP deaminase (184 aa).

DCTP is bound by residues 107 to 112 (KSTYAR), 131 to 133 (TLE), Gln-152, Tyr-166, and Gln-176. Glu-133 serves as the catalytic Proton donor/acceptor.

Belongs to the dCTP deaminase family. Homotrimer.

The catalysed reaction is dCTP + H2O + H(+) = dUTP + NH4(+). Its pathway is pyrimidine metabolism; dUMP biosynthesis; dUMP from dCTP (dUTP route): step 1/2. Functionally, catalyzes the deamination of dCTP to dUTP. The chain is dCTP deaminase from Rhodospirillum centenum (strain ATCC 51521 / SW).